Here is a 368-residue protein sequence, read N- to C-terminus: Glutaminyl-peptide cyclotransferase (368 aa).

The N-terminal stretch at M1–A23 is a signal peptide. Residue N53 is glycosylated (N-linked (GlcNAc...) asparagine). C143 and C169 are oxidised to a cystine. D164 serves as a coordination point for Zn(2+). E207 functions as the Proton acceptor in the catalytic mechanism. Position 208 (E208) interacts with Zn(2+). Residue D254 is the Proton acceptor of the active site. An N-linked (GlcNAc...) asparagine glycan is attached at N292. H336 serves as a coordination point for Zn(2+). An N-linked (GlcNAc...) asparagine glycan is attached at N352.

It belongs to the glutaminyl-peptide cyclotransferase family. Expressed by the venom gland.

It localises to the secreted. The catalysed reaction is N-terminal L-glutaminyl-[peptide] = N-terminal 5-oxo-L-prolyl-[peptide] + NH4(+). Responsible for the biosynthesis of pyroglutamyl peptides. Has a bias against acidic and tryptophan residues adjacent to the N-terminal glutaminyl residue and a lack of importance of chain length after the second residue. Also catalyzes N-terminal pyroglutamate formation. The sequence is that of Glutaminyl-peptide cyclotransferase (QPCT) from Boiga irregularis (Brown tree snake).